Reading from the N-terminus, the 130-residue chain is Large ribosomal subunit protein uL22 (130 aa).

It belongs to the universal ribosomal protein uL22 family. Part of the 50S ribosomal subunit.

In terms of biological role, this protein binds specifically to 23S rRNA; its binding is stimulated by other ribosomal proteins, e.g. L4, L17, and L20. It is important during the early stages of 50S assembly. It makes multiple contacts with different domains of the 23S rRNA in the assembled 50S subunit and ribosome. Its function is as follows. The globular domain of the protein is located near the polypeptide exit tunnel on the outside of the subunit, while an extended beta-hairpin is found that lines the wall of the exit tunnel in the center of the 70S ribosome. This is Large ribosomal subunit protein uL22 from Clavibacter sepedonicus (Clavibacter michiganensis subsp. sepedonicus).